Here is a 235-residue protein sequence, read N- to C-terminus: MGQKSNPIGLRLQVNRTWDSRWFAEGEDYGRMLVEDLKIRQYVFKALPQAAISKVVIERPAKLCRVSIYAARPGVIIGKKGADIEKLRKKLGEMTGSDVSLNIVEIRKPEVDAKLVAQGIADQLERRVAFRRAMKRAVQSAMRLGAEGIRINCAGRLGGAEIARTEWYREGRVPLHTLRANVDYAEAEAHTAYGVCGIKVWIFKGEILGHDPMATDRLMLDAQTTGVRPAREDRR.

The 69-residue stretch at 39–107 (IRQYVFKALP…DVSLNIVEIR (69 aa)) folds into the KH type-2 domain.

It belongs to the universal ribosomal protein uS3 family. As to quaternary structure, part of the 30S ribosomal subunit. Forms a tight complex with proteins S10 and S14.

Functionally, binds the lower part of the 30S subunit head. Binds mRNA in the 70S ribosome, positioning it for translation. This Sphingopyxis alaskensis (strain DSM 13593 / LMG 18877 / RB2256) (Sphingomonas alaskensis) protein is Small ribosomal subunit protein uS3.